A 336-amino-acid polypeptide reads, in one-letter code: Holliday junction branch migration complex subunit RuvB (336 aa).

The large ATPase domain (RuvB-L) stretch occupies residues 4 to 184; it reads SDRLISSQSI…FGIVQRLEYY (181 aa). ATP-binding positions include Ile-23, Arg-24, Gly-65, Lys-68, Thr-69, Thr-70, 131–133, Arg-174, Tyr-184, and Arg-221; that span reads EDY. Thr-69 is a binding site for Mg(2+). The segment at 185 to 255 is small ATPAse domain (RuvB-S); the sequence is SVDSLTQIVA…MAQQALEMLE (71 aa). Residues 258-336 are head domain (RuvB-H); it reads QHGFDLMDRK…HFGFSAIEQE (79 aa). The DNA site is built by Arg-313 and Arg-318.

It belongs to the RuvB family. In terms of assembly, homohexamer. Forms an RuvA(8)-RuvB(12)-Holliday junction (HJ) complex. HJ DNA is sandwiched between 2 RuvA tetramers; dsDNA enters through RuvA and exits via RuvB. An RuvB hexamer assembles on each DNA strand where it exits the tetramer. Each RuvB hexamer is contacted by two RuvA subunits (via domain III) on 2 adjacent RuvB subunits; this complex drives branch migration. In the full resolvosome a probable DNA-RuvA(4)-RuvB(12)-RuvC(2) complex forms which resolves the HJ.

The protein resides in the cytoplasm. It carries out the reaction ATP + H2O = ADP + phosphate + H(+). Its function is as follows. The RuvA-RuvB-RuvC complex processes Holliday junction (HJ) DNA during genetic recombination and DNA repair, while the RuvA-RuvB complex plays an important role in the rescue of blocked DNA replication forks via replication fork reversal (RFR). RuvA specifically binds to HJ cruciform DNA, conferring on it an open structure. The RuvB hexamer acts as an ATP-dependent pump, pulling dsDNA into and through the RuvAB complex. RuvB forms 2 homohexamers on either side of HJ DNA bound by 1 or 2 RuvA tetramers; 4 subunits per hexamer contact DNA at a time. Coordinated motions by a converter formed by DNA-disengaged RuvB subunits stimulates ATP hydrolysis and nucleotide exchange. Immobilization of the converter enables RuvB to convert the ATP-contained energy into a lever motion, pulling 2 nucleotides of DNA out of the RuvA tetramer per ATP hydrolyzed, thus driving DNA branch migration. The RuvB motors rotate together with the DNA substrate, which together with the progressing nucleotide cycle form the mechanistic basis for DNA recombination by continuous HJ branch migration. Branch migration allows RuvC to scan DNA until it finds its consensus sequence, where it cleaves and resolves cruciform DNA. In Legionella pneumophila (strain Lens), this protein is Holliday junction branch migration complex subunit RuvB.